The following is a 377-amino-acid chain: MADFLPSRSVLSVCFPGCVLTNGEAEQQRKSKEIDKCLSREKTYVKRLVKILLLGAGESGKSTFLKQMRIIHGQDFDQRAREEFRPTIYSNVIKGMRVLVDAREKLHIPWGDNKNQVHGDKLMAFDTRAPMAAQGMVETRVFLQYLPAIRALWDDSGIQNAYDRRREFQLGESVKYFLDNLDKLGVPDYIPSQQDILLARRPTKGIHEYDFEIKNVPFKMVDVGGQRSERKRWFECFDSVTSILFLVSSSEFDQVLMEDRLTNRLTESLNIFETIVNNRVFSNVSIILFLNKTDLLEEKVQVVSIKDYFLEFEGDPHCLRDVQKFLVECFRGKRRDQQQRPLYHHFTTAINTENIRLVFRDVKDTILHDNLKQLMLQ.

S-palmitoyl cysteine attachment occurs at residues Cys14 and Cys18. A G-alpha domain is found at 47 to 377; the sequence is RLVKILLLGA…HDNLKQLMLQ (331 aa). The segment at 50–63 is G1 motif; sequence KILLLGAGESGKST. GTP is bound by residues 58–63, Ser173, and 197–200; these read ESGKST and LLAR. Mg(2+) is bound at residue Ser62. The interval 195–203 is G2 motif; the sequence is DILLARRPT. Thr203 contacts Mg(2+). Thr203 carries the post-translational modification Phosphothreonine; by PKA. Positions 218 to 227 are G3 motif; sequence FKMVDVGGQR. The segment at 287–294 is G4 motif; the sequence is ILFLNKTD. Residues 291-294 and Ala349 contribute to the GTP site; that span reads NKTD. Positions 347 to 352 are G5 motif; sequence TTAINT.

It belongs to the G-alpha family. G(12) subfamily. In terms of assembly, g proteins are composed of 3 units; alpha, beta and gamma. The alpha chain contains the guanine nucleotide binding site. Interacts with UBXD5. Interacts with HAX1. Interacts (in GTP-bound form) with PPP5C (via TPR repeats); activates PPP5C phosphatase activity and translocates PPP5C to the cell membrane. Interacts with RGS22. Interacts with ARHGEF1. Interacts (in GTP-bound form) with ARHGEF11 (via RGS domain). Interacts (in GTP-bound form) with ARHGEF12 (via RGS domain). Interacts (in GTP-bound form) with CTNND1. Interacts with GAS2L2. Interacts with GPR35. Interacts with GPR174. Palmitoylation is critical for proper membrane localization and signaling. In terms of processing, phosphorylation on Thr-203 by PKA destabilizes the heterotrimer of alpha, beta and gamma, and inhibits Rho activation.

Its subcellular location is the membrane. It is found in the melanosome. It localises to the cytoplasm. The protein localises to the nucleus. Guanine nucleotide-binding proteins (G proteins) are involved as modulators or transducers in various transmembrane signaling systems. Activates effector molecule RhoA by binding and activating RhoGEFs (ARHGEF1/p115RhoGEF, ARHGEF11/PDZ-RhoGEF and ARHGEF12/LARG). GNA13-dependent Rho signaling subsequently regulates transcription factor AP-1 (activating protein-1). Promotes tumor cell invasion and metastasis by activating RhoA/ROCK signaling pathway. Inhibits CDH1-mediated cell adhesion in process independent from Rho activation. In lymphoid follicles, transmits P2RY8- and S1PR2-dependent signals that lead to inhibition of germinal center (GC) B cell growth and migration outside the GC niche. The sequence is that of Guanine nucleotide-binding protein subunit alpha-13 (Gna13) from Rattus norvegicus (Rat).